We begin with the raw amino-acid sequence, 250 residues long: Cholesterol ring-cleaving hydrolase IpdB subunit (250 aa).

The protein belongs to the 3-oxoacid CoA-transferase subunit B family. Heterotetramer composed of 2 IpdA subunits and 2 IpdB subunits.

The enzyme catalyses (3E)-2-(2-carboxylatoethyl)-3-methyl-6-oxocyclohex-1-ene-1-carboxyl-CoA + H2O = 6-methyl-3,7-dioxodecanedioyl-CoA. It participates in steroid metabolism; cholesterol degradation. Functionally, involved in the final steps of cholesterol and steroid degradation. Opens the last steroid ring of cholesterol by catalyzing the hydrolysis of (3E)-2-(2-carboxylatoethyl)-3-methyl-6-oxocyclohex-1-ene-1-carboxyl-CoA (COCHEA-CoA) to 6-methyl-3,7-dioxodecanedioyl-CoA (MeDODA-CoA). This Mycobacterium bovis (strain ATCC BAA-935 / AF2122/97) protein is Cholesterol ring-cleaving hydrolase IpdB subunit.